We begin with the raw amino-acid sequence, 353 residues long: Biotin synthase (353 aa).

Residues M1–P22 show a composition bias toward low complexity. Residues M1 to S30 form a disordered region. The region spanning G72–R299 is the Radical SAM core domain. Residues C87, C91, and C94 each coordinate [4Fe-4S] cluster. Residues C131, C162, C222, and R294 each contribute to the [2Fe-2S] cluster site.

Belongs to the radical SAM superfamily. Biotin synthase family. In terms of assembly, homodimer. [4Fe-4S] cluster serves as cofactor. Requires [2Fe-2S] cluster as cofactor.

It carries out the reaction (4R,5S)-dethiobiotin + (sulfur carrier)-SH + 2 reduced [2Fe-2S]-[ferredoxin] + 2 S-adenosyl-L-methionine = (sulfur carrier)-H + biotin + 2 5'-deoxyadenosine + 2 L-methionine + 2 oxidized [2Fe-2S]-[ferredoxin]. Its pathway is cofactor biosynthesis; biotin biosynthesis; biotin from 7,8-diaminononanoate: step 2/2. In terms of biological role, catalyzes the conversion of dethiobiotin (DTB) to biotin by the insertion of a sulfur atom into dethiobiotin via a radical-based mechanism. In Delftia acidovorans (strain DSM 14801 / SPH-1), this protein is Biotin synthase.